A 53-amino-acid polypeptide reads, in one-letter code: Lupus La protein homolog (53 aa).

The segment covering glycine 1 to aspartate 13 has biased composition (basic and acidic residues). Residues glycine 1–glutamine 53 form a disordered region. Residue lysine 8 is modified to N6-acetyllysine. Threonine 10 carries the post-translational modification Phosphothreonine. Serine 14 carries the phosphoserine modification. Over residues arginine 29–alanine 40 the composition is skewed to basic and acidic residues.

In terms of assembly, interacts with DDX15. May interact with RUFY1. Post-translationally, phosphorylated.

It localises to the nucleus. Binds to the 3' poly(U) terminus of nascent RNA polymerase III transcripts, protecting them from exonuclease digestion and facilitating their folding and maturation. This is Lupus La protein homolog (SSB) from Oryctolagus cuniculus (Rabbit).